The primary structure comprises 845 residues: DNA replication licensing factor MCM7 (845 aa).

Residues 410–617 form the MCM domain; sequence VYNRLAKSIA…DDEKLAEHVT (208 aa). Positions 423, 463, 465, 466, 467, 568, 593, and 687 each coordinate ATP. The Arginine finger motif lies at 592-595; it reads SRFD. At threonine 811 the chain carries Phosphothreonine. The disordered stretch occupies residues 812-845; it reads DQEDSLVSTPKLAPQTTASANVSAQDSDIDLQDA. Serine 819 is subject to Phosphoserine. A compositionally biased stretch (polar residues) spans 825–837; sequence PQTTASANVSAQD. A Phosphoserine modification is found at serine 838.

Belongs to the MCM family. Component of the MCM2-7 complex. The complex forms a toroidal hexameric ring with the proposed subunit order MCM2-MCM6-MCM4-MCM7-MCM3-MCM5; loaded onto DNA, forms a head-head double hexamer. Interacts with CSM1 and MCM10.

Its subcellular location is the cytoplasm. The protein localises to the nucleus. The enzyme catalyses ATP + H2O = ADP + phosphate + H(+). Acts as a component of the MCM2-7 complex (MCM complex) which is the putative replicative helicase essential for 'once per cell cycle' DNA replication initiation and elongation in eukaryotic cells. Core component of CDC45-MCM-GINS (CMG) helicase, the molecular machine that unwinds template DNA during replication, and around which the replisome is built. The active ATPase sites in the MCM2-7 ring are formed through the interaction surfaces of two neighboring subunits such that a critical structure of a conserved arginine finger motif is provided in trans relative to the ATP-binding site of the Walker A box of the adjacent subunit. The six ATPase active sites, however, are likely to contribute differentially to the complex helicase activity. Once loaded onto DNA, double hexamers can slide on dsDNA in the absence of ATPase activity. This is DNA replication licensing factor MCM7 (MCM7) from Saccharomyces cerevisiae (strain ATCC 204508 / S288c) (Baker's yeast).